Consider the following 196-residue polypeptide: Molybdenum cofactor guanylyltransferase (196 aa).

GTP is bound by residues 14–16 (LAG), K27, D73, and D106. D106 contacts Mg(2+).

It belongs to the MobA family. In terms of assembly, monomer. It depends on Mg(2+) as a cofactor.

It is found in the cytoplasm. It catalyses the reaction Mo-molybdopterin + GTP + H(+) = Mo-molybdopterin guanine dinucleotide + diphosphate. Functionally, transfers a GMP moiety from GTP to Mo-molybdopterin (Mo-MPT) cofactor (Moco or molybdenum cofactor) to form Mo-molybdopterin guanine dinucleotide (Mo-MGD) cofactor. The sequence is that of Molybdenum cofactor guanylyltransferase from Acidiphilium cryptum (strain JF-5).